The sequence spans 357 residues: MPIYNFSAGPAVLPQPVITQIQAELPSFRDSGMSILEISHRSDLFAQVLQDAEQDLRDLMAIPDNYHVLFFQGGGTLQFTAAPLNLAPHHRIGLLDSGHWAQRAADEAKRVGTKVTILGSSAANHFNQLPTVVQPIDQSLDYIHLTTNNTIEGTMMTRLPVTGQVPLVADMSSNFLGEPYQVSDFGLIFAGAQKNLGPAGLTIVIVRDDLIGQVANLPSMLDYQLFAAKDSMFNTPPVFAIYAAGLVLKWLKAQGGLSTMTARNHAKAALLYDFLDQSQLFTNPVKTSDRSTMNVPFVTGQADLDAAVIQGAREHGLLNLKGHRLVGGMRASLYNAMPLAGVQALVDYLAAFEAHHR.

R41 contacts L-glutamate. Pyridoxal 5'-phosphate is bound by residues 75–76 (GT), W100, T150, D170, and Q193. The residue at position 194 (K194) is an N6-(pyridoxal phosphate)lysine. 234–235 (NT) is a pyridoxal 5'-phosphate binding site.

Belongs to the class-V pyridoxal-phosphate-dependent aminotransferase family. SerC subfamily. As to quaternary structure, homodimer. Pyridoxal 5'-phosphate serves as cofactor.

It is found in the cytoplasm. It catalyses the reaction O-phospho-L-serine + 2-oxoglutarate = 3-phosphooxypyruvate + L-glutamate. The enzyme catalyses 4-(phosphooxy)-L-threonine + 2-oxoglutarate = (R)-3-hydroxy-2-oxo-4-phosphooxybutanoate + L-glutamate. It participates in amino-acid biosynthesis; L-serine biosynthesis; L-serine from 3-phospho-D-glycerate: step 2/3. Catalyzes the reversible conversion of 3-phosphohydroxypyruvate to phosphoserine and of 3-hydroxy-2-oxo-4-phosphonooxybutanoate to phosphohydroxythreonine. The protein is Phosphoserine aminotransferase of Lactiplantibacillus plantarum (strain ATCC BAA-793 / NCIMB 8826 / WCFS1) (Lactobacillus plantarum).